A 1074-amino-acid polypeptide reads, in one-letter code: BRD4-interacting chromatin-remodeling complex-associated protein-like (1074 aa).

4 disordered regions span residues 542–603, 620–689, 834–874, and 887–952; these read AVSS…NTPG, TSPI…GQKR, TPLD…HDQF, and GNIS…SKLP. 4 stretches are compositionally biased toward polar residues: residues 544 to 576, 591 to 603, 620 to 629, and 660 to 680; these read SSASTAHPTLGPTVQSGAPGSNFTGDQLTQANR, ASKSPSTLSNTPG, TSPIPTSKTT, and GATQAQPESSVGSSPSQTAVQ. Position 621 is a phosphoserine (Ser621). Composition is skewed to basic and acidic residues over residues 889-904, 913-925, and 934-948; these read ISKKSEGHSRTLKFDR, PPEDKGGRRDPAK, and EGHRKSLPRPDHGSE. Ser976 bears the Phosphoserine mark.

As to quaternary structure, component of the multiprotein chromatin-remodeling complexes SWI/SNF: SWI/SNF-A (BAF), SWI/SNF-B (PBAF) and related complexes. The canonical complex contains a catalytic subunit (either SMARCA4/BRG1/BAF190A or SMARCA2/BRM/BAF190B) and at least SMARCE1, ACTL6A/BAF53, SMARCC1/BAF155, SMARCC2/BAF170, and SMARCB1/SNF5/BAF47. Other subunits specific to each of the complexes may also be present permitting several possible combinations developmentally and tissue specific. Component of the SWI/SNF (GBAF) subcomplex, which includes at least BICRA or BICRAL (mutually exclusive), BRD9, SS18, the core BAF subunits, SMARCA2/BRM, SMARCA4/BRG1/BAF190A, ACTL6A/BAF53, SMARCC1/BAF155, and SMARCD1/BAF60A.

In terms of biological role, component of SWI/SNF chromatin remodeling subcomplex GBAF that carries out key enzymatic activities, changing chromatin structure by altering DNA-histone contacts within a nucleosome in an ATP-dependent manner. This Mus musculus (Mouse) protein is BRD4-interacting chromatin-remodeling complex-associated protein-like.